The chain runs to 335 residues: MNELIDGPKCASEGIVNAMTSIPVKISFLIIATVIFLSFYFARLAILALLRNNIFSNSTQRILLVCLVNSVFHQAATLEIRIHQVYRSFVYASDPCSLLFHFTECEVELYFYYLTNYFSTYSVFSLTFDRLISHYNPRFYFSQQNFVSNTLLIIQCLLSFGTYYVGLYGVPPFGYVSICYYTPKYAVNFLKINDFRTVVMVFCIIVIIFVYYLSVRSEKQIQRTSYSPGERYWAYENVETSQSVCILIVLQFACILMSSYGVNYIRSKESMMSEEDFHTLAPFFAGVTYASLCLPLVIYFKTKLTIRNRRIRIAVMTSMYGDVGDHMNRLKKSWE.

A run of 5 helical transmembrane segments spans residues 22–42 (IPVKISFLIIATVIFLSFYFA), 151–171 (LLIIQCLLSFGTYYVGLYGVP), 195–215 (FRTVVMVFCIIVIIFVYYLSV), 245–265 (CILIVLQFACILMSSYGVNYI), and 280–300 (LAPFFAGVTYASLCLPLVIYF).

The protein belongs to the nematode receptor-like protein sra family.

It localises to the membrane. The chain is Serpentine receptor class alpha-25 (sra-25) from Caenorhabditis elegans.